Reading from the N-terminus, the 151-residue chain is Cathelicidin-3 (151 aa).

An N-terminal signal peptide occupies residues 1 to 17 (MLSCWVLLLALLGGACA). Residues 18–122 (LPAPLGYSQA…TCVDSMADPV (105 aa)) constitute a propeptide that is removed on maturation. Cystine bridges form between C75–C86 and C97–C114. The helical transmembrane segment at 128–148 (WPLVPVAINTVAAGINLYKAI) threads the bilayer.

Belongs to the cathelicidin family. As to expression, detected in bone marrow, liver and lung.

The protein localises to the secreted. Its subcellular location is the membrane. May bind bacterial lipopolysaccharide (LPS). May have antimicrobial activity and play a role in the innate immune response. This Gallus gallus (Chicken) protein is Cathelicidin-3 (CATHL3).